Reading from the N-terminus, the 247-residue chain is Pyridoxine 5'-phosphate synthase (247 aa).

N12 provides a ligand contact to 3-amino-2-oxopropyl phosphate. 1-deoxy-D-xylulose 5-phosphate is bound at residue 14–15 (DH). R23 contributes to the 3-amino-2-oxopropyl phosphate binding site. The active-site Proton acceptor is the H48. Residues R50 and H55 each coordinate 1-deoxy-D-xylulose 5-phosphate. The active-site Proton acceptor is E75. T105 is a binding site for 1-deoxy-D-xylulose 5-phosphate. H196 functions as the Proton donor in the catalytic mechanism. Residues G197 and 218–219 (GH) each bind 3-amino-2-oxopropyl phosphate.

Belongs to the PNP synthase family. In terms of assembly, homooctamer; tetramer of dimers.

The protein resides in the cytoplasm. It catalyses the reaction 3-amino-2-oxopropyl phosphate + 1-deoxy-D-xylulose 5-phosphate = pyridoxine 5'-phosphate + phosphate + 2 H2O + H(+). Its pathway is cofactor biosynthesis; pyridoxine 5'-phosphate biosynthesis; pyridoxine 5'-phosphate from D-erythrose 4-phosphate: step 5/5. Catalyzes the complicated ring closure reaction between the two acyclic compounds 1-deoxy-D-xylulose-5-phosphate (DXP) and 3-amino-2-oxopropyl phosphate (1-amino-acetone-3-phosphate or AAP) to form pyridoxine 5'-phosphate (PNP) and inorganic phosphate. This chain is Pyridoxine 5'-phosphate synthase, found in Pseudomonas fluorescens (strain Pf0-1).